We begin with the raw amino-acid sequence, 121 residues long: Flagellar protein FliT (121 aa).

The required for homodimerization stretch occupies residues 1–50 (MNHAPHLYFAWQQLVEKSQLMLRLATEEQWDELIASEMAYVNAVQEIAHL). A fliD binding region spans residues 60–98 (MQEQLRPMLRLILDNESKVKQLLQIRMDELAKLVGQSSV).

This sequence belongs to the FliT family. Homodimer. Interacts with FliD and FlhC.

It is found in the cytoplasm. The protein localises to the cytosol. Dual-function protein that regulates the transcription of class 2 flagellar operons and that also acts as an export chaperone for the filament-capping protein FliD. As a transcriptional regulator, acts as an anti-FlhDC factor; it directly binds FlhC, thus inhibiting the binding of the FlhC/FlhD complex to class 2 promoters, resulting in decreased expression of class 2 flagellar operons. As a chaperone, effects FliD transition to the membrane by preventing its premature polymerization, and by directing it to the export apparatus. The polypeptide is Flagellar protein FliT (Escherichia coli O8 (strain IAI1)).